Reading from the N-terminus, the 580-residue chain is Frizzled and smoothened-like protein K (580 aa).

Positions 1 to 18 (MRVLFILFLFYFYTYTEA) are cleaved as a signal peptide. The Extracellular segment spans residues 19–236 (QQYYPIDPTG…QWDNIFDTSD (218 aa)). In terms of domain architecture, FZ spans 25-154 (DPTGKCEQYI…SSDYNLTTYG (130 aa)). Asparagine 52, asparagine 97, asparagine 149, asparagine 170, and asparagine 186 each carry an N-linked (GlcNAc...) asparagine glycan. The helical transmembrane segment at 237-257 (AISLVSLLCSVYLFITYMVIN) threads the bilayer. Topologically, residues 258-264 (PKRNKYD) are cytoplasmic. A helical transmembrane segment spans residues 265–285 (YFFSFFVLSIILMSIAGTIGF). Topologically, residues 286–308 (SVGGTRKLLCPEINRRGVYTDPA) are extracellular. The chain crosses the membrane as a helical span at residues 309 to 329 (VAAAGWIFQFAIINAILWFSI). Over 330 to 349 (NSFELWFQIKFIKRKLHLIK) the chain is Cytoplasmic. The helical transmembrane segment at 350-370 (FYILAVLVISIALSVPLSAIG) threads the bilayer. At 371 to 391 (EFNAGLGNFVVWIESGKYQNW) the chain is on the extracellular side. A helical membrane pass occupies residues 392 to 412 (FFWGPLGIVLTVGTTFIGLVI). Residues 413-434 (WEIYKIVSSTNKSDFFKLQLKP) are Cytoplasmic-facing. Residues 435–455 (LMNMLLIYLTFVYLFGYNFYI) traverse the membrane as a helical segment. Topologically, residues 456–490 (HNSLNGFYGSSEEFKNCIISTDGKDCRIQGPPYSS) are extracellular. A helical membrane pass occupies residues 491–511 (ILMFVFCLRIYGVYCIALYGF). Topologically, residues 512-580 (SPKTRSIWSN…SMEPDEIILR (69 aa)) are cytoplasmic. A Lys-Thr-X-X-X-Trp motif, mediates interaction with the PDZ domain of Dvl family members motif is present at residues 514 to 519 (KTRSIW). Residues 542-580 (TTKGGTSSTDIKMSTNNNSNMDSGGGKSSSMEPDEIILR) are disordered. The span at 551-563 (DIKMSTNNNSNMD) shows a compositional bias: polar residues.

It belongs to the G-protein coupled receptor Fz/Smo family.

The protein resides in the membrane. This Dictyostelium discoideum (Social amoeba) protein is Frizzled and smoothened-like protein K (fslK).